An 85-amino-acid polypeptide reads, in one-letter code: Large ribosomal subunit protein bL27 (85 aa).

Residues 1–22 are disordered; sequence MAHKKGQGSSRNGRDSPGQRRG.

Belongs to the bacterial ribosomal protein bL27 family.

This chain is Large ribosomal subunit protein bL27, found in Anaeromyxobacter dehalogenans (strain 2CP-1 / ATCC BAA-258).